Here is a 417-residue protein sequence, read N- to C-terminus: MKILVLGSGAREHAIITALLAERAGHDIVAAPGNAGIAADVAVEPGLDTLNGAAVTAFAIENGFELVVIGPEAPLVAGVADPLRRRGIPVFGPGRAAAQLEGSKTFAKRIMDEAGVPTGRAVRAATLAEAGSALDEFGAPYVVKADGLAAGKGVIVTEDRAAALAHAARYLTHGSVLVEEFLDGEEVSLFLVSDGHTVLPLSPAQDYKRLLDGDAGPNTGGMGAYSPLTWLPETFVDEVIDTVAMPTVRQLAAEQTPFIGLLYCGLIVTAKGIRVIEFNARFGDPETQVVLPRLVTPLSTLLFAAATGTLSGMPRPEFAPGTTVTVVLASEDYPESPRTGRPIAGLDEAASVPEVTIAHASTARDETTGALLATGGRVLSVVARGATFADARTRAYDALSRIRLDGSQYRTDIAARA.

In terms of domain architecture, ATP-grasp spans Lys108 to Thr307. Residue Leu134 to Ser188 participates in ATP binding. Residues Glu277 and Asn279 each contribute to the Mg(2+) site.

It belongs to the GARS family. Requires Mg(2+) as cofactor. The cofactor is Mn(2+).

The enzyme catalyses 5-phospho-beta-D-ribosylamine + glycine + ATP = N(1)-(5-phospho-beta-D-ribosyl)glycinamide + ADP + phosphate + H(+). It participates in purine metabolism; IMP biosynthesis via de novo pathway; N(1)-(5-phospho-D-ribosyl)glycinamide from 5-phospho-alpha-D-ribose 1-diphosphate: step 2/2. This is Phosphoribosylamine--glycine ligase from Leifsonia xyli subsp. xyli (strain CTCB07).